The primary structure comprises 128 residues: Fluoride-specific ion channel FluC (128 aa).

Transmembrane regions (helical) follow at residues 5–25 (IVAI…LALA), 35–55 (LGTL…AVVF), 67–87 (LFVI…SVEV), and 96–116 (FGWA…LTAL). Na(+) is bound by residues glycine 75 and threonine 78.

This sequence belongs to the fluoride channel Fluc/FEX (TC 1.A.43) family.

The protein localises to the cell inner membrane. It catalyses the reaction fluoride(in) = fluoride(out). Its activity is regulated as follows. Na(+) is not transported, but it plays an essential structural role and its presence is essential for fluoride channel function. In terms of biological role, fluoride-specific ion channel. Important for reducing fluoride concentration in the cell, thus reducing its toxicity. This Burkholderia ambifaria (strain MC40-6) protein is Fluoride-specific ion channel FluC.